The sequence spans 275 residues: MMAADRLRERTLSVTTLAADEFHAPSLDDFFPPSVLIHAGPFELDRLMLIRLLMSVLVAAFFVIAMRSPRLVPRGMQNAAELALDFVRINIAEEILGKEQGKRFLPVITTIFFIVVASNMASIIPFLNISPNARIGMPLVLAALAYIVFNYVGIKKYGFFKYVKSSIVVPGVPLPLHFLLVPIEFISTFILRPFTLMVRLMANMLAGHILLVLFFSATNYFFFVSGGFQAIFGVPSIIAGIAFTFFELLVIFLQAYVFALLTAVYIELALHADEH.

Transmembrane regions (helical) follow at residues 46–66 (RLML…VIAM), 104–124 (FLPV…ASII), 135–155 (IGMP…VGIK), 166–186 (SIVV…IEFI), 204–224 (MLAG…FFFV), 231–251 (IFGV…LLVI), and 252–272 (FLQA…ALHA).

The protein belongs to the ATPase A chain family. In terms of assembly, F-type ATPases have 2 components, CF(1) - the catalytic core - and CF(0) - the membrane proton channel. CF(1) has five subunits: alpha(3), beta(3), gamma(1), delta(1), epsilon(1). CF(0) has three main subunits: a(1), b(2) and c(9-12). The alpha and beta chains form an alternating ring which encloses part of the gamma chain. CF(1) is attached to CF(0) by a central stalk formed by the gamma and epsilon chains, while a peripheral stalk is formed by the delta and b chains.

It is found in the cell membrane. Key component of the proton channel; it plays a direct role in the translocation of protons across the membrane. The chain is ATP synthase subunit a from Rhodococcus erythropolis (strain PR4 / NBRC 100887).